The primary structure comprises 131 residues: Small ribosomal subunit protein uS8 (131 aa).

It belongs to the universal ribosomal protein uS8 family. Part of the 30S ribosomal subunit. Contacts proteins S5 and S12.

In terms of biological role, one of the primary rRNA binding proteins, it binds directly to 16S rRNA central domain where it helps coordinate assembly of the platform of the 30S subunit. The polypeptide is Small ribosomal subunit protein uS8 (Bacteroides thetaiotaomicron (strain ATCC 29148 / DSM 2079 / JCM 5827 / CCUG 10774 / NCTC 10582 / VPI-5482 / E50)).